The following is a 544-amino-acid chain: Protein nucleotidyltransferase YdiU (544 aa).

The ATP site is built by G133, G135, R136, K155, D167, G168, R218, and R225. Catalysis depends on D294, which acts as the Proton acceptor. 2 residues coordinate Mg(2+): N295 and D304. D304 serves as a coordination point for ATP.

Belongs to the SELO family. The cofactor is Mg(2+). Mn(2+) is required as a cofactor.

It catalyses the reaction L-seryl-[protein] + ATP = 3-O-(5'-adenylyl)-L-seryl-[protein] + diphosphate. The enzyme catalyses L-threonyl-[protein] + ATP = 3-O-(5'-adenylyl)-L-threonyl-[protein] + diphosphate. It carries out the reaction L-tyrosyl-[protein] + ATP = O-(5'-adenylyl)-L-tyrosyl-[protein] + diphosphate. The catalysed reaction is L-histidyl-[protein] + UTP = N(tele)-(5'-uridylyl)-L-histidyl-[protein] + diphosphate. It catalyses the reaction L-seryl-[protein] + UTP = O-(5'-uridylyl)-L-seryl-[protein] + diphosphate. The enzyme catalyses L-tyrosyl-[protein] + UTP = O-(5'-uridylyl)-L-tyrosyl-[protein] + diphosphate. Its function is as follows. Nucleotidyltransferase involved in the post-translational modification of proteins. It can catalyze the addition of adenosine monophosphate (AMP) or uridine monophosphate (UMP) to a protein, resulting in modifications known as AMPylation and UMPylation. The protein is Protein nucleotidyltransferase YdiU of Cupriavidus metallidurans (strain ATCC 43123 / DSM 2839 / NBRC 102507 / CH34) (Ralstonia metallidurans).